The following is a 373-amino-acid chain: tRNA pseudouridine synthase Pus10 (373 aa).

D197 serves as the catalytic Nucleophile. The substrate site is built by Y265 and Y336.

This sequence belongs to the pseudouridine synthase Pus10 family.

It carries out the reaction uridine(54) in tRNA = pseudouridine(54) in tRNA. The enzyme catalyses uridine(55) in tRNA = pseudouridine(55) in tRNA. Its function is as follows. Responsible for synthesis of pseudouridine from uracil-54 and uracil-55 in the psi GC loop of transfer RNAs. The chain is tRNA pseudouridine synthase Pus10 from Korarchaeum cryptofilum (strain OPF8).